Reading from the N-terminus, the 210-residue chain is dTTP/UTP pyrophosphatase (210 aa).

The active-site Proton acceptor is Asp80.

The protein belongs to the Maf family. YhdE subfamily. It depends on a divalent metal cation as a cofactor.

Its subcellular location is the cytoplasm. The catalysed reaction is dTTP + H2O = dTMP + diphosphate + H(+). It catalyses the reaction UTP + H2O = UMP + diphosphate + H(+). Nucleoside triphosphate pyrophosphatase that hydrolyzes dTTP and UTP. May have a dual role in cell division arrest and in preventing the incorporation of modified nucleotides into cellular nucleic acids. The sequence is that of dTTP/UTP pyrophosphatase from Nitratidesulfovibrio vulgaris (strain ATCC 29579 / DSM 644 / CCUG 34227 / NCIMB 8303 / VKM B-1760 / Hildenborough) (Desulfovibrio vulgaris).